A 483-amino-acid chain; its full sequence is Membrane-bound lytic murein transglycosylase F (483 aa).

An N-terminal signal peptide occupies residues M1–A18. Residues V19–I270 form a non-LT domain region. The LT domain stretch occupies residues Q272–D483. The active site involves E315.

This sequence in the N-terminal section; belongs to the bacterial solute-binding protein 3 family. It in the C-terminal section; belongs to the transglycosylase Slt family.

It is found in the cell outer membrane. The catalysed reaction is Exolytic cleavage of the (1-&gt;4)-beta-glycosidic linkage between N-acetylmuramic acid (MurNAc) and N-acetylglucosamine (GlcNAc) residues in peptidoglycan, from either the reducing or the non-reducing ends of the peptidoglycan chains, with concomitant formation of a 1,6-anhydrobond in the MurNAc residue.. Murein-degrading enzyme that degrades murein glycan strands and insoluble, high-molecular weight murein sacculi, with the concomitant formation of a 1,6-anhydromuramoyl product. Lytic transglycosylases (LTs) play an integral role in the metabolism of the peptidoglycan (PG) sacculus. Their lytic action creates space within the PG sacculus to allow for its expansion as well as for the insertion of various structures such as secretion systems and flagella. This chain is Membrane-bound lytic murein transglycosylase F, found in Actinobacillus succinogenes (strain ATCC 55618 / DSM 22257 / CCUG 43843 / 130Z).